A 150-amino-acid polypeptide reads, in one-letter code: Autophagy-related protein 16 (150 aa).

Residues 1 to 23 are disordered; it reads MGNFIITERKKAKEERSNPQTDS. Residues 7-17 show a composition bias toward basic and acidic residues; it reads TERKKAKEERS. Residues 61–130 adopt a coiled-coil conformation; it reads DDALLNTLAI…KKEHSQLVAR (70 aa).

The protein belongs to the ATG16 family. Homodimer. Part of the 350 kDa complex which is at least composed of ATG5, ATG12 and ATG16. Several units of each may be present in this complex. Interacts directly with ATG12.

It localises to the preautophagosomal structure membrane. Stabilizes the ATG5-ATG12 conjugate and mediates the formation of the 350 kDa complex, which is necessary for autophagy. The ATG5-ATG12/ATG16 complex is required for efficient promotion of ATG8-conjugation to phosphatidylethanolamine and ATG8 localization to the pre-autophagosomal structure (PAS). Also recruits ATG3 to the PAS. Involved in endoplasmic reticulum-specific autophagic process and is essential for the survival of cells subjected to severe ER stress. The chain is Autophagy-related protein 16 (ATG16) from Saccharomyces cerevisiae (strain YJM789) (Baker's yeast).